A 581-amino-acid chain; its full sequence is Threonine--tRNA ligase (581 aa).

Positions 185–478 (DHRKLGKELD…LVEHYGGAFP (294 aa)) are catalytic. 3 residues coordinate Zn(2+): C278, H329, and H455.

This sequence belongs to the class-II aminoacyl-tRNA synthetase family. As to quaternary structure, homodimer. Requires Zn(2+) as cofactor.

Its subcellular location is the cytoplasm. It carries out the reaction tRNA(Thr) + L-threonine + ATP = L-threonyl-tRNA(Thr) + AMP + diphosphate + H(+). Its function is as follows. Catalyzes the attachment of threonine to tRNA(Thr) in a two-step reaction: L-threonine is first activated by ATP to form Thr-AMP and then transferred to the acceptor end of tRNA(Thr). Also edits incorrectly charged L-seryl-tRNA(Thr). This Borreliella burgdorferi (strain ATCC 35210 / DSM 4680 / CIP 102532 / B31) (Borrelia burgdorferi) protein is Threonine--tRNA ligase.